Consider the following 71-residue polypeptide: uncharacterized protein (71 aa).

This is an uncharacterized protein from Enterobacteria phage T4 (Bacteriophage T4).